A 33-amino-acid polypeptide reads, in one-letter code: AGNKRPIWIMGAMVNAIKDIXDFVNLGANNIEK.

Residue glutamate 32 coordinates Mg(2+).

Belongs to the arthropod phospholipase D family. Class II subfamily. The cofactor is Mg(2+). Post-translationally, contains 2 disulfide bonds. Expressed by the venom gland.

It localises to the secreted. It catalyses the reaction an N-(acyl)-sphingosylphosphocholine = an N-(acyl)-sphingosyl-1,3-cyclic phosphate + choline. It carries out the reaction an N-(acyl)-sphingosylphosphoethanolamine = an N-(acyl)-sphingosyl-1,3-cyclic phosphate + ethanolamine. The catalysed reaction is a 1-acyl-sn-glycero-3-phosphocholine = a 1-acyl-sn-glycero-2,3-cyclic phosphate + choline. The enzyme catalyses a 1-acyl-sn-glycero-3-phosphoethanolamine = a 1-acyl-sn-glycero-2,3-cyclic phosphate + ethanolamine. Functionally, dermonecrotic toxins cleave the phosphodiester linkage between the phosphate and headgroup of certain phospholipids (sphingolipid and lysolipid substrates), forming an alcohol (often choline) and a cyclic phosphate. This toxin acts on sphingomyelin (SM). It may also act on ceramide phosphoethanolamine (CPE), lysophosphatidylcholine (LPC) and lysophosphatidylethanolamine (LPE), but not on lysophosphatidylserine (LPS), and lysophosphatidylglycerol (LPG). It acts by transphosphatidylation, releasing exclusively cyclic phosphate products as second products. In vivo, intradermal injection induces dermonecrosis. Induces hemolysis, increased vascular permeability, edema, inflammatory response, and platelet aggregation. This is Dermonecrotic toxin LiSicTox-alphaI-1 from Loxosceles intermedia (Brown spider).